The sequence spans 500 residues: Lysine--tRNA ligase (500 aa).

Residues Glu-410 and Glu-417 each contribute to the Mg(2+) site.

Belongs to the class-II aminoacyl-tRNA synthetase family. In terms of assembly, homodimer. Requires Mg(2+) as cofactor.

The protein resides in the cytoplasm. The enzyme catalyses tRNA(Lys) + L-lysine + ATP = L-lysyl-tRNA(Lys) + AMP + diphosphate. This Shewanella sediminis (strain HAW-EB3) protein is Lysine--tRNA ligase.